A 580-amino-acid polypeptide reads, in one-letter code: Tyrosyl-DNA phosphodiesterase 1 (580 aa).

The tract at residues 65 to 117 (ATNKEQEAHSSSSKPAVTAPVASGSSSSGSLDTNPSGSSASGPAASQDTSNLA) is disordered. The segment covering 87–110 (SGSSSSGSLDTNPSGSSASGPAAS) has biased composition (low complexity). The active-site Nucleophile is His248. Lys250 is a substrate binding site. The tract at residues 387–390 (SIGS) is interaction with DNA. Residue His479 is the Proton donor/acceptor of the active site. Residue Lys481 coordinates substrate.

This sequence belongs to the tyrosyl-DNA phosphodiesterase family. As to expression, expressed in the body and at higher levels in the head. Expressed in the delaminating neuroblasts and a few ganglion mother cells in stage 11-14 embryonic central nervous system. Weak expression is seen in gonads at stage 16. Expressed in the brain; expression is regulated by DIP2.

The protein localises to the nucleus. The protein resides in the cytoplasm. Functionally, DNA repair enzyme that can remove a variety of covalent adducts from DNA through hydrolysis of a 3'-phosphodiester bond, giving rise to DNA with a free 3' phosphate. Catalyzes the hydrolysis of dead-end complexes between DNA and the topoisomerase I active site tyrosine residue. Hydrolyzes 3'-phosphoglycolates on protruding 3' ends on DNA double-strand breaks due to DNA damage by radiation and free radicals. Acts on blunt-ended double-strand DNA breaks and on single-stranded DNA. May have low 3'exonuclease activity and may be able to remove a single nucleoside from the 3'end of DNA and RNA molecules with 3'hydroxyl groups. Has no exonuclease activity towards DNA or RNA with a 3'phosphate. Required for normal polarization of epidermal cells, correct subcellular location of the Crb complex to the apical lateral membrane, and for normal neuronal development during embryonic development. Contributes to maintenance of epithelial cells in response to topoisomerase-1-mediated and oxidative DNA damage. Required for precise axonal bifurcation in mushroom body neurons. Required for maintenance of normal neuronal function. In Drosophila melanogaster (Fruit fly), this protein is Tyrosyl-DNA phosphodiesterase 1.